The primary structure comprises 267 residues: UPF0246 protein Dshi_3333 (267 aa).

The protein belongs to the UPF0246 family.

This is UPF0246 protein Dshi_3333 from Dinoroseobacter shibae (strain DSM 16493 / NCIMB 14021 / DFL 12).